A 284-amino-acid polypeptide reads, in one-letter code: Tropomyosin (284 aa).

Residues 1 to 284 (MEAIKNKMQA…DQTFAELTGY (284 aa)) are a coiled coil.

The protein belongs to the tropomyosin family. As to quaternary structure, homodimer.

Tropomyosin, in association with the troponin complex, plays a central role in the calcium dependent regulation of muscle contraction. The protein is Tropomyosin of Dermatophagoides pteronyssinus (European house dust mite).